We begin with the raw amino-acid sequence, 524 residues long: Adhesion G-protein coupled receptor G5 (524 aa).

An N-terminal signal peptide occupies residues 1-23 (MDPHGALFFYLCLLAAQVVLVET). Residues 24–246 (LSDLLVLMKR…PAELQVPLEY (223 aa)) lie on the Extracellular side of the membrane. N-linked (GlcNAc...) asparagine glycans are attached at residues N58, N65, N96, N143, N169, and N175. One can recognise a GAIN-B domain in the interval 74–235 (QSLVFKLSCD…AVLMQLSGDP (162 aa)). 2 cysteine pairs are disulfide-bonded: C185–C217 and C205–C219. A GPS region spans residues 185–235 (CVFWKEGASKSSWGAWSPEGCYTEQPSATQVLCHCNHLTYFAVLMQLSGDP). Positions 224 to 232 (YFAVLMQLS) are stachel. Residues 247-267 (ISFVGCSISIVASLLTILLYA) traverse the membrane as a helical segment. The Cytoplasmic portion of the chain corresponds to 268–284 (QSRKQSDSTTRIHMNLN). A helical membrane pass occupies residues 285–305 (GSVLLLNVTFLLSSQMTLPTM). Residues 306–319 (PRPVCKVLAAVLHY) lie on the Extracellular side of the membrane. The cysteines at positions 310 and 400 are disulfide-linked. A helical transmembrane segment spans residues 320–340 (ALLSSLTWMAIEGFNLYLFLG). The Cytoplasmic portion of the chain corresponds to 341 to 351 (RVYNAYIRRYL). Residues 352-372 (LKLCMLGWGFPALLVLLLLMI) form a helical membrane-spanning segment. Over 373–413 (KSSVYGPCVTSLSKSQENGTGFQNVSMCWIRSPMVHSILVM) the chain is Extracellular. Residues N390 and N396 are each glycosylated (N-linked (GlcNAc...) asparagine). A helical transmembrane segment spans residues 414–434 (GYGGFTSLFNLVVLAWALWIL). The Cytoplasmic portion of the chain corresponds to 435–453 (CRLRAREKALSPWAYRDTA). Residues 454–476 (MVLGLTVLLGTTWTLAFFSFGVF) traverse the membrane as a helical segment. Residues 477-480 (LLPQ) are Extracellular-facing. A helical membrane pass occupies residues 481–500 (LFLFTIFNSLYGFFLFLWFC). The Cytoplasmic segment spans residues 501 to 524 (SQKRYSDAEAKAEMEAVSSSQMTH).

It belongs to the G-protein coupled receptor 2 family. Adhesion G-protein coupled receptor (ADGR) subfamily. Heterodimer of 2 chains generated by proteolytic processing; the large extracellular N-terminal fragment and the membrane-bound C-terminal fragment predominantly remain associated and non-covalently linked. Post-translationally, autoproteolytically processed at the GPS region of the GAIN-B domain; this cleavage modulates receptor activity. As to expression, expressed at least in kidney, heart, brain and spleen. In terms of tissue distribution, isoform 1 is predominant in spleen. In the kidney, both isoform 1 and isoform 2 are expressed at similar levels. Isoform 2 is the major form in heart and brain. In the kidney, both isoform 1 and isoform 2 are expressed at similar levels.

It localises to the cell membrane. Forms a heterodimer of 2 chains generated by proteolytic processing that remain associated through non-covalent interactions mediated by the GAIN-B domain. In the inactivated receptor, the Stachel sequence (also named stalk) is embedded in the GAIN-B domain, where it adopts a beta-strand conformation. On activation, the Stachel moves into the 7 transmembrane region and adopts a twisted hook-shaped configuration that forms contacts within the receptor, leading to coupling of a G-alpha protein, which activates signaling. The cleaved GAIN-B and N-terminal domains can then dissociate from the rest of the receptor. Its function is as follows. Orphan adhesion G-protein coupled receptor (aGPCR). Ligand binding causes a conformation change that triggers signaling via guanine nucleotide-binding proteins (G proteins) and modulates the activity of downstream effectors, such as adenylate cyclase. ADGRG5 is specifically coupled to G(s) G proteins and mediates activation of adenylate cyclase activity. Isoform 1, but not isoform 2, is constitutively active, as evidenced by elevated basal cAMP levels, and responds to mechanical activation (shaking). This Mus musculus (Mouse) protein is Adhesion G-protein coupled receptor G5.